A 213-amino-acid polypeptide reads, in one-letter code: MKTMILLLCLLGSAQSLPKQLNPASGVPATKPTPGQVTPLPQQQPNQVFPSISLIPLTQLLTLGSDLPLFNPAAGPHGAHTLPFTLGPLNGQQQLQPQMLPIIVAQLGAQGALLSSEELPLASQIFTGLLIHPLFPGAIPPSGQAGTKPDVQNGVLPTRQAGAKAVNQGTTPGHVTTPGVTDDDDYEMSTPAGLRRATHTTEGTTIDPPNRTQ.

The signal sequence occupies residues 1–16; it reads MKTMILLLCLLGSAQS. Disordered stretches follow at residues 22-43 and 162-213; these read NPAS…LPQQ and GAKA…NRTQ. Over residues 33 to 43 the composition is skewed to polar residues; sequence TPGQVTPLPQQ. Low complexity predominate over residues 169-180; it reads GTTPGHVTTPGV.

The protein belongs to the amelotin family. Post-translationally, phosphorylated by FAM20C in vitro. O-glycosylated. Specifically expressed in maturation-stage ameloblasts.

The protein localises to the secreted. In terms of biological role, is a promoter of calcium phosphate mineralization, playing a critical role in the formation of the compact, mineralized, aprismatic enamel surface layer during the maturation stage of amelogenesis. The chain is Amelotin (Amtn) from Mus musculus (Mouse).